Here is a 47-residue protein sequence, read N- to C-terminus: MADYAEINNFPPELSSSGDKYFHLRNYSEYSEYTSGFFLSLMIFIKS.

This is Protein YtiD (ytiD) from Escherichia coli (strain K12).